Here is a 736-residue protein sequence, read N- to C-terminus: Phosphoribosylformylglycinamidine synthase subunit PurL (736 aa).

Histidine 48 is a catalytic residue. ATP contacts are provided by tyrosine 51 and lysine 90. Glutamate 92 serves as a coordination point for Mg(2+). Substrate contacts are provided by residues 93–96 (SHNH) and arginine 115. Histidine 94 serves as the catalytic Proton acceptor. A Mg(2+)-binding site is contributed by aspartate 116. Position 239 (glutamine 239) interacts with substrate. Aspartate 267 contacts Mg(2+). Position 311–313 (311–313 (ESQ)) interacts with substrate. ATP-binding residues include aspartate 492 and glycine 529. Asparagine 530 is a binding site for Mg(2+). Serine 532 contributes to the substrate binding site.

Belongs to the FGAMS family. In terms of assembly, monomer. Part of the FGAM synthase complex composed of 1 PurL, 1 PurQ and 2 PurS subunits.

It is found in the cytoplasm. The enzyme catalyses N(2)-formyl-N(1)-(5-phospho-beta-D-ribosyl)glycinamide + L-glutamine + ATP + H2O = 2-formamido-N(1)-(5-O-phospho-beta-D-ribosyl)acetamidine + L-glutamate + ADP + phosphate + H(+). It participates in purine metabolism; IMP biosynthesis via de novo pathway; 5-amino-1-(5-phospho-D-ribosyl)imidazole from N(2)-formyl-N(1)-(5-phospho-D-ribosyl)glycinamide: step 1/2. Functionally, part of the phosphoribosylformylglycinamidine synthase complex involved in the purines biosynthetic pathway. Catalyzes the ATP-dependent conversion of formylglycinamide ribonucleotide (FGAR) and glutamine to yield formylglycinamidine ribonucleotide (FGAM) and glutamate. The FGAM synthase complex is composed of three subunits. PurQ produces an ammonia molecule by converting glutamine to glutamate. PurL transfers the ammonia molecule to FGAR to form FGAM in an ATP-dependent manner. PurS interacts with PurQ and PurL and is thought to assist in the transfer of the ammonia molecule from PurQ to PurL. The protein is Phosphoribosylformylglycinamidine synthase subunit PurL of Bradyrhizobium diazoefficiens (strain JCM 10833 / BCRC 13528 / IAM 13628 / NBRC 14792 / USDA 110).